Consider the following 97-residue polypeptide: Aspartyl/glutamyl-tRNA(Asn/Gln) amidotransferase subunit C (97 aa).

The protein belongs to the GatC family. In terms of assembly, heterotrimer of A, B and C subunits.

It carries out the reaction L-glutamyl-tRNA(Gln) + L-glutamine + ATP + H2O = L-glutaminyl-tRNA(Gln) + L-glutamate + ADP + phosphate + H(+). The catalysed reaction is L-aspartyl-tRNA(Asn) + L-glutamine + ATP + H2O = L-asparaginyl-tRNA(Asn) + L-glutamate + ADP + phosphate + 2 H(+). Functionally, allows the formation of correctly charged Asn-tRNA(Asn) or Gln-tRNA(Gln) through the transamidation of misacylated Asp-tRNA(Asn) or Glu-tRNA(Gln) in organisms which lack either or both of asparaginyl-tRNA or glutaminyl-tRNA synthetases. The reaction takes place in the presence of glutamine and ATP through an activated phospho-Asp-tRNA(Asn) or phospho-Glu-tRNA(Gln). This Nostoc punctiforme (strain ATCC 29133 / PCC 73102) protein is Aspartyl/glutamyl-tRNA(Asn/Gln) amidotransferase subunit C.